The sequence spans 355 residues: 3-dehydroquinate synthase (355 aa).

NAD(+)-binding positions include 66-71, 100-104, 124-125, lysine 136, lysine 145, and 163-166; these read SGETTK, GATGD, TT, and FLET. Zn(2+)-binding residues include glutamate 178, histidine 242, and histidine 256.

Belongs to the sugar phosphate cyclases superfamily. Dehydroquinate synthase family. Requires Co(2+) as cofactor. It depends on Zn(2+) as a cofactor. The cofactor is NAD(+).

The protein resides in the cytoplasm. It catalyses the reaction 7-phospho-2-dehydro-3-deoxy-D-arabino-heptonate = 3-dehydroquinate + phosphate. The protein operates within metabolic intermediate biosynthesis; chorismate biosynthesis; chorismate from D-erythrose 4-phosphate and phosphoenolpyruvate: step 2/7. Its function is as follows. Catalyzes the conversion of 3-deoxy-D-arabino-heptulosonate 7-phosphate (DAHP) to dehydroquinate (DHQ). This is 3-dehydroquinate synthase from Staphylococcus saprophyticus subsp. saprophyticus (strain ATCC 15305 / DSM 20229 / NCIMB 8711 / NCTC 7292 / S-41).